We begin with the raw amino-acid sequence, 959 residues long: Isoleucine--tRNA ligase (959 aa).

A 'HIGH' region motif is present at residues 60 to 70 (PYANGSLHMGH). Glutamate 569 is an L-isoleucyl-5'-AMP binding site. A 'KMSKS' region motif is present at residues 610–614 (KMSKS). Lysine 613 provides a ligand contact to ATP. The Zn(2+) site is built by cysteine 928, cysteine 931, cysteine 948, and cysteine 951.

Belongs to the class-I aminoacyl-tRNA synthetase family. IleS type 1 subfamily. Monomer. Zn(2+) serves as cofactor.

It is found in the cytoplasm. It carries out the reaction tRNA(Ile) + L-isoleucine + ATP = L-isoleucyl-tRNA(Ile) + AMP + diphosphate. In terms of biological role, catalyzes the attachment of isoleucine to tRNA(Ile). As IleRS can inadvertently accommodate and process structurally similar amino acids such as valine, to avoid such errors it has two additional distinct tRNA(Ile)-dependent editing activities. One activity is designated as 'pretransfer' editing and involves the hydrolysis of activated Val-AMP. The other activity is designated 'posttransfer' editing and involves deacylation of mischarged Val-tRNA(Ile). This chain is Isoleucine--tRNA ligase, found in Gloeothece citriformis (strain PCC 7424) (Cyanothece sp. (strain PCC 7424)).